The chain runs to 135 residues: Protein Wnt-7c (135 aa).

2 cysteine pairs are disulfide-bonded: Cys-3–Cys-17 and Cys-5–Cys-12. Residue Ser-9 is the site of O-palmitoleoyl serine; by PORCN attachment. 3 N-linked (GlcNAc...) asparagine glycosylation sites follow: Asn-62, Asn-85, and Asn-98. 3 disulfide bridges follow: Cys-81–Cys-112, Cys-97–Cys-107, and Cys-134–Cys-135.

Belongs to the Wnt family. Palmitoleoylation is required for efficient binding to frizzled receptors. Depalmitoleoylation leads to Wnt signaling pathway inhibition.

The protein localises to the secreted. Its subcellular location is the extracellular space. It is found in the extracellular matrix. Its function is as follows. Ligand for members of the frizzled family of seven transmembrane receptors. Probable developmental protein. May be a signaling molecule which affects the development of discrete regions of tissues. Is likely to signal over only few cell diameters. The protein is Protein Wnt-7c (wnt7c) of Xenopus laevis (African clawed frog).